The following is a 240-amino-acid chain: Large ribosomal subunit protein uL2 (240 aa).

Residues 200–240 form a disordered region; it reads HPFGGGGRQHPGKPKSISRNAPPGRKVGDIASKRTGRGGNE.

The protein belongs to the universal ribosomal protein uL2 family. As to quaternary structure, part of the 50S ribosomal subunit. Forms a bridge to the 30S subunit in the 70S ribosome. Interacts weakly with protein L37Ae.

One of the primary rRNA binding proteins. Required for association of the 30S and 50S subunits to form the 70S ribosome, for tRNA binding and peptide bond formation. It has been suggested to have peptidyltransferase activity; this is somewhat controversial. Makes several contacts with the 16S rRNA in the 70S ribosome. In Haloarcula marismortui (strain ATCC 43049 / DSM 3752 / JCM 8966 / VKM B-1809) (Halobacterium marismortui), this protein is Large ribosomal subunit protein uL2 (rpl2).